The following is a 343-amino-acid chain: Dihydroorotase (343 aa).

Positions 13 and 15 each coordinate Zn(2+). Substrate contacts are provided by residues 15-17 (HLR) and asparagine 41. The Zn(2+) site is built by lysine 99, histidine 136, and histidine 174. Position 99 is an N6-carboxylysine (lysine 99). Histidine 136 contributes to the substrate binding site. Leucine 219 provides a ligand contact to substrate. Position 247 (aspartate 247) interacts with Zn(2+). Aspartate 247 is a catalytic residue. Substrate-binding residues include histidine 251 and alanine 263.

This sequence belongs to the metallo-dependent hydrolases superfamily. DHOase family. Class II DHOase subfamily. As to quaternary structure, homodimer. The cofactor is Zn(2+).

The enzyme catalyses (S)-dihydroorotate + H2O = N-carbamoyl-L-aspartate + H(+). The protein operates within pyrimidine metabolism; UMP biosynthesis via de novo pathway; (S)-dihydroorotate from bicarbonate: step 3/3. Its function is as follows. Catalyzes the reversible cyclization of carbamoyl aspartate to dihydroorotate. This Shewanella putrefaciens (strain CN-32 / ATCC BAA-453) protein is Dihydroorotase.